We begin with the raw amino-acid sequence, 124 residues long: MLKQKALVDVLGQVNTSGVDGSWLFNKEGLLLAYVGSEQKAVASNVSSALIASVWAALERRANDLKETILVLENGVIGCTLVARTMLLAVKADKSADLGMVRAKLHTLAAYLEQPILSISHDLG.

The protein belongs to the GAMAD family. Part of the Ragulator complex.

Regulator of the TOR pathway, a signaling cascade that promotes cell growth in response to growth factors, energy levels, and amino acids. May activate the TOR signaling cascade in response to amino acids. The sequence is that of Ragulator complex protein LAMTOR2 homolog from Caenorhabditis elegans.